The following is a 744-amino-acid chain: MSAANPETPNSTISREASTQSSSAAASQGWVLPEGKIVPNTVFVGGIDARMDETEIGSCFGRYGSVKEVKIITNRTGVSKGYGFVSFVNDVDVQKIVGSQIHFHGKKLKLGPAIRKQKLCARHVQPRPLVVNPPPPPQFQNVWRNPNTETYLQPQITPNPVTQHVQSAANPETPNSTISREASTQSSSAAASQGWVLPEGKIVPNTVFVGGIDARMDETEIGSCFGRYGSVKEVKIITNRTGVSKGYGFVSFVNDVDVQKIVGSQIHFHGKKLKLGPAIRKQKLCARHVQPRPLVVNPPPPPQFQNVWRNPNTETYLQPQITPNPVTQHVQSAANPETPNSTISREASTQSSSAAASQGWVLPEGKIVPNTVFVGGIDARMDETEIGSCFGRYGSVKEVKIITNRTGVSKGYGFVSFVNDVDVQKIVGSQIHFHGKKLKLGPAIRKQKLCARHVQPRPLVVNPPPPPQFQNVWRNPNTETYLQPQITPNPVTQHVQAYSAYPHSPGQVITGCQLLVYNYQEYPTYPDSAFQVTTGYQLPVYNYQPFPAYPRSPFQVTAGYQLPVYNYQAFPAYPNSPFQVATGYQFPVYNYQPFPAYPSSPFQVTAGYQLPVYNYQAFPAYPNSPFQVATGYQFPVYNYQAFPAYPNSPVQVTTGYQLPVYNYQAFPAYPSSPFQVTTGYQLPVYNYQAFPAYPNSAVQVTTGYQFHVYNYQMPPQCPVGEQRRNLWTEAYKWWYLVCLIQRRD.

Residues 1-10 (MSAANPETPN) are compositionally biased toward polar residues. Residues 1–27 (MSAANPETPNSTISREASTQSSSAAAS) are disordered. The span at 11-27 (STISREASTQSSSAAAS) shows a compositional bias: low complexity. Residues 40-115 (NTVFVGGIDA…KKLKLGPAIR (76 aa)) form the RRM 1 domain. Residues 163–175 (QHVQSAANPETPN) show a composition bias toward polar residues. The tract at residues 163 to 192 (QHVQSAANPETPNSTISREASTQSSSAAAS) is disordered. Low complexity predominate over residues 176–192 (STISREASTQSSSAAAS). Residues 205 to 280 (NTVFVGGIDA…KKLKLGPAIR (76 aa)) form the RRM 2 domain. The span at 328–340 (QHVQSAANPETPN) shows a compositional bias: polar residues. The segment at 328–357 (QHVQSAANPETPNSTISREASTQSSSAAAS) is disordered. A compositionally biased stretch (low complexity) spans 341 to 357 (STISREASTQSSSAAAS). One can recognise an RRM 3 domain in the interval 370–445 (NTVFVGGIDA…KKLKLGPAIR (76 aa)). DAZ domains are found at residues 497 to 520 (AYSA…YNYQ), 521 to 544 (EYPT…YNYQ), 545 to 568 (PFPA…YNYQ), 569 to 592 (AFPA…YNYQ), 593 to 616 (PFPA…YNYQ), 617 to 640 (AFPA…YNYQ), 641 to 664 (AFPA…YNYQ), 665 to 688 (AFPA…YNYQ), and 689 to 712 (AFPA…YNYQ).

This sequence belongs to the RRM DAZ family. In terms of assembly, forms a heterodimer with BOLL and DAZL. Interacts with PUM2, DAZAP1, DAZAP2, DZIP1 and DZIP3. In terms of tissue distribution, testis-specific. Expression restricted to premeiotic germ cells, particularly in spermatogonia (at protein level).

The protein resides in the cytoplasm. Its subcellular location is the nucleus. In terms of biological role, RNA-binding protein that plays an essential role in spermatogenesis. May act by binding to the 3'-UTR of mRNAs and regulating their translation. Promotes germ-cell progression to meiosis and formation of haploid germ cells. The chain is Deleted in azoospermia protein 1 (DAZ1) from Homo sapiens (Human).